We begin with the raw amino-acid sequence, 240 residues long: EF-hand domain-containing protein D2 (240 aa).

The tract at residues 1–51 (MATDELASKLSRRLQMEGEGGEATEQPGLNGAAAAAAAEAPDETAQALGSA) is disordered. A2 is subject to N-acetylalanine. The residue at position 11 (S11) is a Phosphoserine. Over residues 32–47 (AAAAAAAEAPDETAQA) the composition is skewed to low complexity. A phosphoserine mark is found at S74 and S76. Position 83 is a phosphotyrosine (Y83). 2 EF-hand domains span residues 92-127 (KQIK…LGAP) and 128-163 (QTHL…AAAG). Positions 105, 109, 116, 141, 143, 145, 147, and 152 each coordinate Ca(2+). K233 carries the N6-acetyllysine modification.

Interacts with CASP9; with inactive form. In terms of tissue distribution, detected in thymus, kidney, spleen, lung, liver and brain. Highest abundance in brain and lowest in kidney and thymus.

The protein localises to the membrane raft. In terms of biological role, may regulate B-cell receptor (BCR)-induced immature and primary B-cell apoptosis. Plays a role as negative regulator of the canonical NF-kappa-B-activating branch. Controls spontaneous apoptosis through the regulation of BCL2L1 abundance. This chain is EF-hand domain-containing protein D2 (Efhd2), found in Mus musculus (Mouse).